A 361-amino-acid chain; its full sequence is CRISPR system associated protein Cas8 (361 aa).

Monomer. Can form a Cascade complex with Csa5, Cas7, Cas5a, Cas3 and Cas3'.

In terms of biological role, CRISPR (clustered regularly interspaced short palindromic repeat) is an adaptive immune system that provides protection against mobile genetic elements (viruses, transposable elements and conjugative plasmids). CRISPR clusters contain sequences complementary to antecedent mobile elements and target invading nucleic acids. CRISPR clusters are transcribed and processed into CRISPR RNA (crRNA). In Thermoproteus tenax (strain ATCC 35583 / DSM 2078 / JCM 9277 / NBRC 100435 / Kra 1), this protein is CRISPR system associated protein Cas8 (cas8a2).